The primary structure comprises 126 residues: Large ribosomal subunit protein uL14m (126 aa).

It belongs to the universal ribosomal protein uL14 family. As to quaternary structure, component of the mitochondrial large ribosomal subunit (mt-LSU). Mature yeast 74S mitochondrial ribosomes consist of a small (37S) and a large (54S) subunit. The 37S small subunit contains a 15S ribosomal RNA (15S mt-rRNA) and at least 32 different proteins. The 54S large subunit contains a 21S rRNA (21S mt-rRNA) and at least 45 different proteins.

The protein localises to the mitochondrion. Functionally, component of the mitochondrial ribosome (mitoribosome), a dedicated translation machinery responsible for the synthesis of mitochondrial genome-encoded proteins, including at least some of the essential transmembrane subunits of the mitochondrial respiratory chain. The mitoribosomes are attached to the mitochondrial inner membrane and translation products are cotranslationally integrated into the membrane. The chain is Large ribosomal subunit protein uL14m (mrpl38) from Schizosaccharomyces pombe (strain 972 / ATCC 24843) (Fission yeast).